A 96-amino-acid chain; its full sequence is Growth-regulated alpha protein (96 aa).

Residues 1-24 (MVSATRSLLCAALPVLATSRQATG) form the signal peptide. Intrachain disulfides connect C33–C59 and C35–C75.

It belongs to the intercrine alpha (chemokine CxC) family. As to quaternary structure, monomer and homodimer. In terms of tissue distribution, at least expressed in the lung and trachea.

Its subcellular location is the secreted. Its function is as follows. Has chemotactic activity for neutrophils. Contributes to neutrophil activation during inflammation. The protein is Growth-regulated alpha protein (Cxcl1) of Rattus norvegicus (Rat).